We begin with the raw amino-acid sequence, 332 residues long: ADP-L-glycero-D-manno-heptose-6-epimerase (332 aa).

NADP(+)-binding positions include M10–I11, D31–K32, K38, K53, M75–S79, and N92. Residue Y145 is the Proton acceptor of the active site. K149 provides a ligand contact to NADP(+). N173 is a binding site for substrate. 2 residues coordinate NADP(+): V174 and K182. K182 (proton acceptor) is an active-site residue. Substrate-binding positions include R184, H191, F205 to Y208, R219, and Y290.

Belongs to the NAD(P)-dependent epimerase/dehydratase family. HldD subfamily. In terms of assembly, homopentamer. The cofactor is NADP(+).

It carries out the reaction ADP-D-glycero-beta-D-manno-heptose = ADP-L-glycero-beta-D-manno-heptose. The protein operates within nucleotide-sugar biosynthesis; ADP-L-glycero-beta-D-manno-heptose biosynthesis; ADP-L-glycero-beta-D-manno-heptose from D-glycero-beta-D-manno-heptose 7-phosphate: step 4/4. Functionally, catalyzes the interconversion between ADP-D-glycero-beta-D-manno-heptose and ADP-L-glycero-beta-D-manno-heptose via an epimerization at carbon 6 of the heptose. The sequence is that of ADP-L-glycero-D-manno-heptose-6-epimerase from Fusobacterium nucleatum subsp. nucleatum (strain ATCC 25586 / DSM 15643 / BCRC 10681 / CIP 101130 / JCM 8532 / KCTC 2640 / LMG 13131 / VPI 4355).